Reading from the N-terminus, the 344-residue chain is uncharacterized protein (344 aa).

Transmembrane regions (helical) follow at residues 25–45 (GAGWACGVTVVLPPPGTVGAV), 68–88 (FVDALLLAGGSAYGLAAADGV), 104–124 (GVVPIVPGAVIFDLPVGGWNC), 133–153 (SACAAAGVDVAVGTVGVGVGA), 161–181 (GVGTASATLQSGVTVGVLAVV), 224–244 (LGAFNTPFNTTIGVIACDAAL), 276–296 (VFALATGAVAVPPEAGVPAAL), and 302–322 (LVTAVGAAAADCLARAVLAGV).

It belongs to the peptidase S58 family.

The protein localises to the cell membrane. In terms of biological role, aminopeptidase. This is an uncharacterized protein from Mycobacterium bovis (strain ATCC BAA-935 / AF2122/97).